Consider the following 148-residue polypeptide: Large ribosomal subunit protein bL9 (148 aa).

Belongs to the bacterial ribosomal protein bL9 family.

In terms of biological role, binds to the 23S rRNA. In Staphylococcus haemolyticus (strain JCSC1435), this protein is Large ribosomal subunit protein bL9.